The primary structure comprises 388 residues: Succinate--CoA ligase [ADP-forming] subunit beta (388 aa).

In terms of domain architecture, ATP-grasp spans 9-244 (KQLFAEYGLP…PSQEDEREAH (236 aa)). ATP contacts are provided by residues K46, 53–55 (GRG), E99, S102, and E107. Positions 199 and 213 each coordinate Mg(2+). Substrate contacts are provided by residues N264 and 321–323 (GIV).

This sequence belongs to the succinate/malate CoA ligase beta subunit family. As to quaternary structure, heterotetramer of two alpha and two beta subunits. The cofactor is Mg(2+).

It carries out the reaction succinate + ATP + CoA = succinyl-CoA + ADP + phosphate. The enzyme catalyses GTP + succinate + CoA = succinyl-CoA + GDP + phosphate. The protein operates within carbohydrate metabolism; tricarboxylic acid cycle; succinate from succinyl-CoA (ligase route): step 1/1. Succinyl-CoA synthetase functions in the citric acid cycle (TCA), coupling the hydrolysis of succinyl-CoA to the synthesis of either ATP or GTP and thus represents the only step of substrate-level phosphorylation in the TCA. The beta subunit provides nucleotide specificity of the enzyme and binds the substrate succinate, while the binding sites for coenzyme A and phosphate are found in the alpha subunit. This is Succinate--CoA ligase [ADP-forming] subunit beta from Aliivibrio salmonicida (strain LFI1238) (Vibrio salmonicida (strain LFI1238)).